We begin with the raw amino-acid sequence, 240 residues long: Small ribosomal subunit protein uS2 (240 aa).

The protein belongs to the universal ribosomal protein uS2 family.

The sequence is that of Small ribosomal subunit protein uS2 from Wigglesworthia glossinidia brevipalpis.